Reading from the N-terminus, the 775-residue chain is Suppressor of glycerol defect protein 1 (775 aa).

Basic residues-rich tracts occupy residues 1-11 and 28-49; these read MRPIKKSRSLK and RRGK…RISR. Disordered stretches follow at residues 1–101 and 152–253; these read MRPI…LLDP and IDDI…GGDK. Composition is skewed to basic and acidic residues over residues 52–79, 177–193, and 209–223; these read NGYE…DAHR, TGDH…REGN, and DEFH…RMDP. The 202-residue stretch at 262–463 folds into the MIF4G domain; that stretch reads RRKLQGSLNK…ESITNLKENK (202 aa). The region spanning 565–689 is the MI domain; sequence TLRTSIFVAL…PLTILKHVDF (125 aa).

Belongs to the CWC22 family.

It localises to the nucleus. The protein localises to the nucleolus. In terms of biological role, involved in osmoregulatory glycerol response. In Schizosaccharomyces pombe (strain 972 / ATCC 24843) (Fission yeast), this protein is Suppressor of glycerol defect protein 1 (sgd1).